The sequence spans 1442 residues: Chitin synthase regulator SKT5 (1442 aa).

2 disordered regions span residues 1–54 (MTHP…SPTL) and 72–117 (LALK…RHLQ). Residues 12–25 (NGKEPEKEEPRCVH) show a composition bias toward basic and acidic residues. The span at 39–53 (KSSSAITNENVSSPT) shows a compositional bias: polar residues. Positions 75-99 (KEPENGKNKHPDSEQDDGDMKEQRS) are enriched in basic and acidic residues. 7 Sel1-like repeats span residues 198–236 (VESQYLAGDCCMNGYGMSKGRPDLGLAYSYFVQAGKRGH), 237–272 (PDAAYRAGTCYEKGWGCRRDPAKAVQFYKMAASRKH), 273–309 (PGAQYRLGTAELNGELGLKRLAREGVKWLKRSAENAT), 313–350 (PHALHELALLHEKGIYNVLFVDNEYSCELLAQAVEMGY), 351–387 (APSAYKLGVNYEYGRMGCPQDSGLSIHMYNIAAQQNH), 388–425 (KEACFALTSWYLVGVPGILPQSDTEAYLWAKRAAEQGL), and 426–461 (AKAEYACGYFCENGIGTPRDLGEAKGWYQRAVEHGD). The segment at 550–1402 (EKPKTATPTS…FSTPDSSSSK (853 aa)) is disordered. Over residues 605 to 617 (PKPPTPPPPPPPE) the composition is skewed to pro residues. Residues 633-648 (FKSRLLRLGKMGKIRK) are compositionally biased toward basic residues. Over residues 747–758 (GPSSAAGADGAP) the composition is skewed to low complexity. Composition is skewed to basic and acidic residues over residues 762–804 (GEPK…KSEK), 821–840 (GSDKPGSEDKKNQEVPKPSD), and 859–875 (RPDEKNSSLVERSKDSE). Over residues 876–891 (STSPSSPKPTTGSAEP) the composition is skewed to low complexity. Pro residues-rich tracts occupy residues 964–977 (PFPPGARPGMPPNA), 1139–1158 (RPGPRPFSPTFPSPAGPSRP), and 1200–1220 (AMQPGRPPSPSSPFGRPPTGP). The span at 1232–1243 (PSQSSMHQSGNG) shows a compositional bias: polar residues. A compositionally biased stretch (pro residues) spans 1271 to 1282 (PRPPRPTSPPPF). Residues 1295 to 1305 (RGVMPPGSGPS) show a composition bias toward low complexity. Composition is skewed to pro residues over residues 1306 to 1322 (MRPPQPPAIIPPPPRSP) and 1371 to 1386 (DRPPFAPPTHVTPPKT). Residues 1392 to 1402 (GFSTPDSSSSK) show a composition bias toward polar residues.

This sequence belongs to the SKT5 family.

It is found in the cell membrane. Its function is as follows. Activator of the chitin synthase CHS3 which polymerizes chitin, a structural polymer of the fungal cell wall. The polypeptide is Chitin synthase regulator SKT5 (Malassezia restricta (strain ATCC 96810 / NBRC 103918 / CBS 7877) (Seborrheic dermatitis infection agent)).